Consider the following 293-residue polypeptide: Formamidopyrimidine-DNA glycosylase (293 aa).

Pro2 functions as the Schiff-base intermediate with DNA in the catalytic mechanism. The Proton donor role is filled by Glu3. Lys60 (proton donor; for beta-elimination activity) is an active-site residue. The DNA site is built by His110, Arg129, and Lys174. The FPG-type zinc finger occupies 259 to 293 (NVYRRTGKKCHACKNLIERQKISGRSTHWCRKCQK). Residue Arg283 is the Proton donor; for delta-elimination activity of the active site.

It belongs to the FPG family. As to quaternary structure, monomer. It depends on Zn(2+) as a cofactor.

The catalysed reaction is Hydrolysis of DNA containing ring-opened 7-methylguanine residues, releasing 2,6-diamino-4-hydroxy-5-(N-methyl)formamidopyrimidine.. The enzyme catalyses 2'-deoxyribonucleotide-(2'-deoxyribose 5'-phosphate)-2'-deoxyribonucleotide-DNA = a 3'-end 2'-deoxyribonucleotide-(2,3-dehydro-2,3-deoxyribose 5'-phosphate)-DNA + a 5'-end 5'-phospho-2'-deoxyribonucleoside-DNA + H(+). In terms of biological role, involved in base excision repair of DNA damaged by oxidation or by mutagenic agents. Acts as a DNA glycosylase that recognizes and removes damaged bases. Has a preference for oxidized purines, such as 7,8-dihydro-8-oxoguanine (8-oxoG). Has AP (apurinic/apyrimidinic) lyase activity and introduces nicks in the DNA strand. Cleaves the DNA backbone by beta-delta elimination to generate a single-strand break at the site of the removed base with both 3'- and 5'-phosphates. This Prochlorococcus marinus (strain MIT 9515) protein is Formamidopyrimidine-DNA glycosylase.